The chain runs to 523 residues: ATP synthase subunit alpha (523 aa).

Residue 179-186 participates in ATP binding; sequence GDRQTGKT.

It belongs to the ATPase alpha/beta chains family. In terms of assembly, F-type ATPases have 2 components, CF(1) - the catalytic core - and CF(0) - the membrane proton channel. CF(1) has five subunits: alpha(3), beta(3), gamma(1), delta(1), epsilon(1). CF(0) has three main subunits: a(1), b(2) and c(9-12). The alpha and beta chains form an alternating ring which encloses part of the gamma chain. CF(1) is attached to CF(0) by a central stalk formed by the gamma and epsilon chains, while a peripheral stalk is formed by the delta and b chains.

The protein localises to the cell inner membrane. The catalysed reaction is ATP + H2O + 4 H(+)(in) = ADP + phosphate + 5 H(+)(out). In terms of biological role, produces ATP from ADP in the presence of a proton gradient across the membrane. The alpha chain is a regulatory subunit. This is ATP synthase subunit alpha from Vibrio parahaemolyticus serotype O3:K6 (strain RIMD 2210633).